The sequence spans 269 residues: Tryptophan synthase alpha chain (269 aa).

Active-site proton acceptor residues include Glu49 and Asp60.

The protein belongs to the TrpA family. In terms of assembly, tetramer of two alpha and two beta chains.

It catalyses the reaction (1S,2R)-1-C-(indol-3-yl)glycerol 3-phosphate + L-serine = D-glyceraldehyde 3-phosphate + L-tryptophan + H2O. Its pathway is amino-acid biosynthesis; L-tryptophan biosynthesis; L-tryptophan from chorismate: step 5/5. The alpha subunit is responsible for the aldol cleavage of indoleglycerol phosphate to indole and glyceraldehyde 3-phosphate. The polypeptide is Tryptophan synthase alpha chain (Pseudomonas putida (strain GB-1)).